The primary structure comprises 163 residues: 18 kDa protein (163 aa).

This Mus musculus (Mouse) protein is 18 kDa protein.